The primary structure comprises 715 residues: Fatty acid oxidation complex subunit alpha (715 aa).

The enoyl-CoA hydratase/isomerase stretch occupies residues 1-190; that stretch reads MIYEGKAITV…KVGAVDAVVA (190 aa). Residue Asp297 participates in substrate binding. The 3-hydroxyacyl-CoA dehydrogenase stretch occupies residues 312-715; that stretch reads HDVKQAAVLG…MAKNGQRFFN (404 aa). NAD(+) contacts are provided by residues Met325, Asp344, 401 to 403, Lys408, and Ser430; that span reads VVE. Residue His451 is the For 3-hydroxyacyl-CoA dehydrogenase activity of the active site. Asn454 lines the NAD(+) pocket. Residues Asn501 and Tyr660 each coordinate substrate.

The protein in the N-terminal section; belongs to the enoyl-CoA hydratase/isomerase family. In the C-terminal section; belongs to the 3-hydroxyacyl-CoA dehydrogenase family. As to quaternary structure, heterotetramer of two alpha chains (FadB) and two beta chains (FadA).

It carries out the reaction a (3S)-3-hydroxyacyl-CoA + NAD(+) = a 3-oxoacyl-CoA + NADH + H(+). The enzyme catalyses a (3S)-3-hydroxyacyl-CoA = a (2E)-enoyl-CoA + H2O. It catalyses the reaction a 4-saturated-(3S)-3-hydroxyacyl-CoA = a (3E)-enoyl-CoA + H2O. The catalysed reaction is (3S)-3-hydroxybutanoyl-CoA = (3R)-3-hydroxybutanoyl-CoA. It carries out the reaction a (3Z)-enoyl-CoA = a 4-saturated (2E)-enoyl-CoA. The enzyme catalyses a (3E)-enoyl-CoA = a 4-saturated (2E)-enoyl-CoA. The protein operates within lipid metabolism; fatty acid beta-oxidation. Its function is as follows. Involved in the aerobic and anaerobic degradation of long-chain fatty acids via beta-oxidation cycle. Catalyzes the formation of 3-oxoacyl-CoA from enoyl-CoA via L-3-hydroxyacyl-CoA. It can also use D-3-hydroxyacyl-CoA and cis-3-enoyl-CoA as substrate. The protein is Fatty acid oxidation complex subunit alpha of Pseudomonas putida (strain GB-1).